Reading from the N-terminus, the 328-residue chain is DNA-directed RNA polymerase subunit alpha (328 aa).

The alpha N-terminal domain (alpha-NTD) stretch occupies residues 1 to 232 (MHNSLAELIK…QHLAILVDLK (232 aa)). The interval 246–328 (FDPLLLHPVD…PPEGLKKLNQ (83 aa)) is alpha C-terminal domain (alpha-CTD).

This sequence belongs to the RNA polymerase alpha chain family. As to quaternary structure, homodimer. The RNAP catalytic core consists of 2 alpha, 1 beta, 1 beta' and 1 omega subunit. When a sigma factor is associated with the core the holoenzyme is formed, which can initiate transcription.

The catalysed reaction is RNA(n) + a ribonucleoside 5'-triphosphate = RNA(n+1) + diphosphate. DNA-dependent RNA polymerase catalyzes the transcription of DNA into RNA using the four ribonucleoside triphosphates as substrates. This is DNA-directed RNA polymerase subunit alpha from Methylococcus capsulatus (strain ATCC 33009 / NCIMB 11132 / Bath).